Reading from the N-terminus, the 510-residue chain is DNA nucleotidylexotransferase (510 aa).

A disordered region spans residues 1 to 22; that stretch reads MDPLQAVHLGPRKKRPRQLGTP. The short motif at 11-17 is the Nuclear localization signal element; the sequence is PRKKRPR. Residues 27–124 form the BRCT domain; that stretch reads PYDIRFRDLV…KPVEMMGRHQ (98 aa). Ser134 bears the Phosphoserine mark. Residues 151 to 510 are mediates interaction with DNTTIP2; that stretch reads SQYACQRRTT…DYIEPWERNA (360 aa). Positions 258–262 are involved in DNA binding; the sequence is VGLKT. Residues 333-338 and 342-345 contribute to the a 2'-deoxyribonucleoside 5'-triphosphate site; these read GFRRGK and HDVD. 3 residues coordinate Mg(2+): Asp343, Asp345, and Asp434. 449–450 provides a ligand contact to a 2'-deoxyribonucleoside 5'-triphosphate; it reads GW.

It belongs to the DNA polymerase type-X family. In terms of assembly, interacts with PRP19 and DNTTIP1. Forms a ternary complex with DNTTIP2 and core histone. Released from this complex by PCNA. Interacts with TRERF1. Requires Mg(2+) as cofactor. Isoform TDT-L: Expressed in the thymus, and, at lower levels, in the bone marrow. Detected in both cycling and noncycling pro-B and pre-B cells (at protein level). Isoform TDT-S: Expressed in both cycling and noncycling pro-B, but not pre-B, cells (at protein level). Not detected in mature peripheral or germinal center B cells.

Its subcellular location is the nucleus. The protein localises to the cytoplasm. It carries out the reaction DNA(n) + a 2'-deoxyribonucleoside 5'-triphosphate = DNA(n+1) + diphosphate. Functionally, transferase that catalyzes the nontemplated addition of nucleoside triphosphate to coding ends during V(D)J recombination (N addition). Involved in the generation of diversity in the antigen-binding region of immunoglobulin heavy and light chains and T-cell receptors during B- and T-cell development. Does not act on double-stranded DNA with blunt ends. 3'-to-5' DNA exonuclease. Involved in the generation of diversity in the antigen-binding region of immunoglobulin heavy and light chains and T-cell receptors during B- and T-cell development. Acts on single-stranded and double-stranded DNA with 3' or 5' extensions, but not on double-stranded DNA with blunt ends. Attenuates not only isoform TDT-S-catalyzed N addition, but also P (palindromic) addition in coding joins. Lacks terminal transferase activity. This is DNA nucleotidylexotransferase (Dntt) from Mus musculus (Mouse).